The following is a 299-amino-acid chain: ATP phosphoribosyltransferase (299 aa).

This sequence belongs to the ATP phosphoribosyltransferase family. Long subfamily. Requires Mg(2+) as cofactor.

The protein localises to the cytoplasm. The catalysed reaction is 1-(5-phospho-beta-D-ribosyl)-ATP + diphosphate = 5-phospho-alpha-D-ribose 1-diphosphate + ATP. It functions in the pathway amino-acid biosynthesis; L-histidine biosynthesis; L-histidine from 5-phospho-alpha-D-ribose 1-diphosphate: step 1/9. Feedback inhibited by histidine. In terms of biological role, catalyzes the condensation of ATP and 5-phosphoribose 1-diphosphate to form N'-(5'-phosphoribosyl)-ATP (PR-ATP). Has a crucial role in the pathway because the rate of histidine biosynthesis seems to be controlled primarily by regulation of HisG enzymatic activity. The chain is ATP phosphoribosyltransferase from Shewanella sediminis (strain HAW-EB3).